Consider the following 427-residue polypeptide: 3-isopropylmalate dehydratase large subunit (427 aa).

Positions 308, 368, and 371 each coordinate [4Fe-4S] cluster.

This sequence belongs to the aconitase/IPM isomerase family. LeuC type 2 subfamily. In terms of assembly, heterodimer of LeuC and LeuD. The cofactor is [4Fe-4S] cluster.

It catalyses the reaction (2R,3S)-3-isopropylmalate = (2S)-2-isopropylmalate. It functions in the pathway amino-acid biosynthesis; L-leucine biosynthesis; L-leucine from 3-methyl-2-oxobutanoate: step 2/4. In terms of biological role, catalyzes the isomerization between 2-isopropylmalate and 3-isopropylmalate, via the formation of 2-isopropylmaleate. This chain is 3-isopropylmalate dehydratase large subunit, found in Citrifermentans bemidjiense (strain ATCC BAA-1014 / DSM 16622 / JCM 12645 / Bem) (Geobacter bemidjiensis).